The primary structure comprises 265 residues: Translation initiation factor 2 subunit alpha (265 aa).

Residues 12–83 enclose the S1 motif domain; sequence GELIIGTVYK…KKGHVDASLK (72 aa).

The protein belongs to the eIF-2-alpha family. As to quaternary structure, heterotrimer composed of an alpha, a beta and a gamma chain.

Its function is as follows. eIF-2 functions in the early steps of protein synthesis by forming a ternary complex with GTP and initiator tRNA. In Methanobrevibacter smithii (strain ATCC 35061 / DSM 861 / OCM 144 / PS), this protein is Translation initiation factor 2 subunit alpha.